The chain runs to 106 residues: Putative protein SH (106 aa).

The disordered stretch occupies residues His-48–Ser-106. Residues Phe-58–Ser-80 show a composition bias toward basic and acidic residues. Residues Thr-81 to Thr-92 are compositionally biased toward low complexity.

As to expression, heart.

May be involved with the regulation of GNRH gene expression. It is not known if this protein is transcribed. This chain is Putative protein SH, found in Rattus norvegicus (Rat).